Here is a 702-residue protein sequence, read N- to C-terminus: Polyribonucleotide nucleotidyltransferase (702 aa).

The Mg(2+) site is built by Asp493 and Asp499. A KH domain is found at 559-619; sequence PKVEIFNVDP…NLISQSKEYI (61 aa). The S1 motif domain maps to 643 to 702; the sequence is GEEFLGRVQKVVEFGVFVELKEGVDGLLHNSKIKEKLEVGHEIKVKVAEIKNGKVSLDLA.

This sequence belongs to the polyribonucleotide nucleotidyltransferase family. Requires Mg(2+) as cofactor.

It is found in the cytoplasm. The enzyme catalyses RNA(n+1) + phosphate = RNA(n) + a ribonucleoside 5'-diphosphate. In terms of biological role, involved in mRNA degradation. Catalyzes the phosphorolysis of single-stranded polyribonucleotides processively in the 3'- to 5'-direction. The polypeptide is Polyribonucleotide nucleotidyltransferase (Campylobacter lari (strain RM2100 / D67 / ATCC BAA-1060)).